Consider the following 732-residue polypeptide: Photosystem I P700 chlorophyll a apoprotein A1 (732 aa).

Helical transmembrane passes span 61–84, 145–168, 185–209, 278–296, 317–340, 356–382, 414–436, and 510–528; these read VFSS…FHGA, LKYA…FHMH, NAGQ…HIAL, IASH…GIIA, WHSR…HHIY, LSLF…IFMI, IIMG…IYIH, and FMVH…LILM. Positions 552 and 561 each coordinate [4Fe-4S] cluster. Helical transmembrane passes span 568 to 589 and 644 to 666; these read HVFL…HFFW and LSGY…MFLW. His-655 contributes to the chlorophyll a' binding site. Residues Met-663 and Tyr-671 each contribute to the chlorophyll a site. Trp-672 contacts phylloquinone. A helical transmembrane segment spans residues 704–724; that stretch reads AVGLVHYMLGGIGTTWAFFLA.

Belongs to the PsaA/PsaB family. In terms of assembly, the PsaA/B heterodimer binds the P700 chlorophyll special pair and subsequent electron acceptors. PSI consists of a core antenna complex that captures photons, and an electron transfer chain that converts photonic excitation into a charge separation. The eukaryotic PSI reaction center is composed of at least 11 subunits. P700 is a chlorophyll a/chlorophyll a' dimer, A0 is one or more chlorophyll a, A1 is one or both phylloquinones and FX is a shared 4Fe-4S iron-sulfur center. is required as a cofactor.

The protein resides in the plastid. Its subcellular location is the chloroplast thylakoid membrane. It carries out the reaction reduced [plastocyanin] + hnu + oxidized [2Fe-2S]-[ferredoxin] = oxidized [plastocyanin] + reduced [2Fe-2S]-[ferredoxin]. In terms of biological role, psaA and PsaB bind P700, the primary electron donor of photosystem I (PSI), as well as the electron acceptors A0, A1 and FX. PSI is a plastocyanin/cytochrome c6-ferredoxin oxidoreductase, converting photonic excitation into a charge separation, which transfers an electron from the donor P700 chlorophyll pair to the spectroscopically characterized acceptors A0, A1, FX, FA and FB in turn. Oxidized P700 is reduced on the lumenal side of the thylakoid membrane by plastocyanin or cytochrome c6. The chain is Photosystem I P700 chlorophyll a apoprotein A1 from Heterocapsa triquetra (Dinoflagellate).